The sequence spans 334 residues: Mucin-15 (334 aa).

Positions 1-23 (MLALAKILLISTLFYSLLSGSHG) are cleaved as a signal peptide. Residues 24-236 (KENQDINTTQ…SDPQKENRNT (213 aa)) are Extracellular-facing. N30, N61, N79, N90, N148, N155, N163, N218, and N225 each carry an N-linked (GlcNAc...) asparagine glycan. A disordered region spans residues 64–104 (TSNLKASHSPPLNLPNNSHGITDFSSNSSAEHSLGSLKPTS). Positions 77 to 94 (LPNNSHGITDFSSNSSAE) are enriched in polar residues. A helical transmembrane segment spans residues 237 to 257 (GIVFGAILGAILGVSLLTLVG). Over 258-334 (YLLCGKRKTD…DDIPPLRTSV (77 aa)) the chain is Cytoplasmic. The segment at 304–334 (PTLNDSAMPESEENARDGIPMDDIPPLRTSV) is disordered.

Post-translationally, highly glycosylated (N- and O-linked carbohydrates). In terms of tissue distribution, expressed in spleen, thymus, prostate, testis, ovary, small intestine, colon, peripheral blood leukocyte, bone marrow, lymph node and lung.

The protein localises to the cell membrane. It localises to the secreted. Functionally, may play a role in the cell adhesion to the extracellular matrix. The protein is Mucin-15 (MUC15) of Homo sapiens (Human).